The primary structure comprises 333 residues: Adenosine deaminase (333 aa).

Zn(2+)-binding residues include histidine 12 and histidine 14. Substrate-binding residues include histidine 14, aspartate 16, and glycine 170. Residue histidine 197 coordinates Zn(2+). Glutamate 200 serves as the catalytic Proton donor. Aspartate 278 contacts Zn(2+). Substrate is bound at residue aspartate 279.

Belongs to the metallo-dependent hydrolases superfamily. Adenosine and AMP deaminases family. Adenosine deaminase subfamily. It depends on Zn(2+) as a cofactor.

It carries out the reaction adenosine + H2O + H(+) = inosine + NH4(+). It catalyses the reaction 2'-deoxyadenosine + H2O + H(+) = 2'-deoxyinosine + NH4(+). Functionally, catalyzes the hydrolytic deamination of adenosine and 2-deoxyadenosine. The sequence is that of Adenosine deaminase from Pseudoalteromonas translucida (strain TAC 125).